Consider the following 206-residue polypeptide: Ras-related protein Rab-7a (206 aa).

Position 15–22 (15–22) interacts with GTP; sequence GDSGVGKT. Residues Ser-17 and Ser-23 each carry the phosphoserine modification. Residues Thr-34, Thr-40, and Thr-64 each carry the phosphothreonine modification. GTP-binding positions include 34–40 and 63–67; these read TQQYRAT and DTAGQ. The short motif at 37 to 45 is the Effector region element; the sequence is YRATVGADF. The residue at position 72 (Ser-72) is a Phosphoserine. Phosphotyrosine is present on residues Tyr-78 and Tyr-88. Residues 125–128 and 157–158 contribute to the GTP site; these read NKLD and AK. S-geranylgeranyl cysteine attachment occurs at residues Cys-205 and Cys-206.

Belongs to the small GTPase superfamily. Rab family.

Its subcellular location is the cytoplasmic vesicle. The protein localises to the phagosome membrane. It is found in the late endosome membrane. The protein resides in the lysosome membrane. It localises to the autophagosome membrane. Its subcellular location is the lipid droplet. The catalysed reaction is GTP + H2O = GDP + phosphate + H(+). Small GTPase which cycles between active GTP-bound and inactive GDP-bound states. In its active state, binds to a variety of effector proteins playing a key role in the regulation of endo-lysosomal trafficking. Governs early-to-late endosomal maturation, microtubule minus-end as well as plus-end directed endosomal migration and positioning, and endosome-lysosome transport through different protein-protein interaction cascades. Involved in lipophagy, a cytosolic lipase-independent autophagic pathway. Plays a role in phagocyte formation and acidification. The protein is Ras-related protein Rab-7a of Paramecium octaurelia.